The following is a 167-amino-acid chain: tRNA-specific adenosine deaminase (167 aa).

A CMP/dCMP-type deaminase domain is found at 6–117; that stretch reads FSHEYWMRHA…DAKTGAAGSL (112 aa). Histidine 57 contacts Zn(2+). The active-site Proton donor is glutamate 59. Residues cysteine 87 and cysteine 90 each coordinate Zn(2+).

Belongs to the cytidine and deoxycytidylate deaminase family. Homodimer. Zn(2+) is required as a cofactor.

The enzyme catalyses adenosine(34) in tRNA + H2O + H(+) = inosine(34) in tRNA + NH4(+). In terms of biological role, catalyzes the deamination of adenosine to inosine at the wobble position 34 of tRNA(Arg2). Essential for cell viability. This is tRNA-specific adenosine deaminase from Escherichia coli (strain K12).